The primary structure comprises 473 residues: GTPase Der (473 aa).

EngA-type G domains follow at residues 5-170 and 178-351; these read PVVA…PNQE and LKLA…QSSM. Residues 11-18, 58-62, 123-126, 184-191, 231-235, and 296-299 each bind GTP; these read GRPNVGKS, DTGGI, NKVD, DTAGV, and NKWD. The KH-like domain occupies 352–436; that stretch reads FEVSTNRLTQ…PLNVVFKLNE (85 aa). Polar residues predominate over residues 438-454; that stretch reads PYANKSDTPTKAKTQQL. Residues 438–473 are disordered; that stretch reads PYANKSDTPTKAKTQQLRQRERNRAQKFTTKDKKPR. The segment covering 455–473 has biased composition (basic and acidic residues); it reads RQRERNRAQKFTTKDKKPR.

This sequence belongs to the TRAFAC class TrmE-Era-EngA-EngB-Septin-like GTPase superfamily. EngA (Der) GTPase family. As to quaternary structure, associates with the 50S ribosomal subunit.

In terms of biological role, GTPase that plays an essential role in the late steps of ribosome biogenesis. The sequence is that of GTPase Der from Psychrobacter arcticus (strain DSM 17307 / VKM B-2377 / 273-4).